The sequence spans 381 residues: 1-deoxy-D-xylulose 5-phosphate reductoisomerase (381 aa).

Positions 10, 11, 12, 13, 36, 37, 38, and 122 each coordinate NADPH. 1-deoxy-D-xylulose 5-phosphate is bound at residue Lys-123. An NADPH-binding site is contributed by Glu-124. Asp-148 provides a ligand contact to Mn(2+). 1-deoxy-D-xylulose 5-phosphate-binding residues include Ser-149, Glu-150, Ser-173, and His-196. A Mn(2+)-binding site is contributed by Glu-150. Gly-202 provides a ligand contact to NADPH. 1-deoxy-D-xylulose 5-phosphate contacts are provided by Ser-209, Asn-214, Lys-215, and Glu-218. A Mn(2+)-binding site is contributed by Glu-218.

Belongs to the DXR family. It depends on Mg(2+) as a cofactor. Mn(2+) serves as cofactor.

The enzyme catalyses 2-C-methyl-D-erythritol 4-phosphate + NADP(+) = 1-deoxy-D-xylulose 5-phosphate + NADPH + H(+). The protein operates within isoprenoid biosynthesis; isopentenyl diphosphate biosynthesis via DXP pathway; isopentenyl diphosphate from 1-deoxy-D-xylulose 5-phosphate: step 1/6. Functionally, catalyzes the NADPH-dependent rearrangement and reduction of 1-deoxy-D-xylulose-5-phosphate (DXP) to 2-C-methyl-D-erythritol 4-phosphate (MEP). The protein is 1-deoxy-D-xylulose 5-phosphate reductoisomerase of Desulfitobacterium hafniense (strain DSM 10664 / DCB-2).